Here is a 487-residue protein sequence, read N- to C-terminus: Nitrate reductase beta chain (487 aa).

4Fe-4S ferredoxin-type domains are found at residues 7-36 (IGMV…RSGA), 172-203 (VFMM…KREE), and 205-234 (GIVL…FNWQ). 7 residues coordinate [4Fe-4S] cluster: Cys16, Cys19, Cys22, Cys26, Cys181, Cys184, and Cys189. Cys193, Cys214, and Cys220 together coordinate [3Fe-4S] cluster. Residues Cys224, Cys241, Cys244, Cys256, and Cys260 each coordinate [4Fe-4S] cluster.

[4Fe-4S] cluster serves as cofactor. The cofactor is [3Fe-4S] cluster.

It is found in the cell membrane. The catalysed reaction is nitrate + a quinol = a quinone + nitrite + H2O. Its function is as follows. The beta chain is an electron transfer unit containing four cysteine clusters involved in the formation of iron-sulfur centers. Electrons are transferred from the gamma chain to the molybdenum cofactor of the alpha subunit. This chain is Nitrate reductase beta chain (narH), found in Bacillus subtilis (strain 168).